An 83-amino-acid chain; its full sequence is Apolipoprotein C-I, basic form (83 aa).

An N-terminal signal peptide occupies residues 1-26 (MRLFLSLPVLVVVLSIVLEGPAPAQG).

The protein belongs to the apolipoprotein C1 family.

Its subcellular location is the secreted. In terms of biological role, inhibitor of lipoprotein binding to the low density lipoprotein (LDL) receptor, LDL receptor-related protein, and very low density lipoprotein (VLDL) receptor. Associates with high density lipoproteins (HDL) and the triacylglycerol-rich lipoproteins in the plasma and makes up about 10% of the protein of the VLDL and 2% of that of HDL. Appears to interfere directly with fatty acid uptake and is also the major plasma inhibitor of cholesteryl ester transfer protein (CETP). Binds free fatty acids and reduces their intracellular esterification. Modulates the interaction of APOE with beta-migrating VLDL and inhibits binding of beta-VLDL to the LDL receptor-related protein. This is Apolipoprotein C-I, basic form (APOC1B) from Pan troglodytes (Chimpanzee).